The primary structure comprises 553 residues: Retrotransposon Gag-like protein 3 (553 aa).

A coiled-coil region spans residues Val2–Ser43. Disordered regions lie at residues Pro38–Pro274 and Ser474–Arg514. Over residues Ala45–Glu57 the composition is skewed to basic and acidic residues. Positions Ala58–Ser73 are enriched in low complexity. Residues Glu87–Gln113 show a composition bias toward basic and acidic residues. Residues Thr118–Ile127 are compositionally biased toward polar residues. Positions Gly132–Glu147 are enriched in basic and acidic residues. The segment covering Gln239 to Gln250 has biased composition (polar residues). Residues Ser474–Ser483 show a composition bias toward low complexity. The span at Thr495 to Pro507 shows a compositional bias: polar residues. The segment at Cys523 to Pro537 adopts a CCHC-type zinc-finger fold.

In terms of tissue distribution, expressed in embryonic myogenic progenitor cells, not expressed in adult and aged satellite cells.

The protein localises to the nucleus. Its function is as follows. May function as a transcriptional regulator. Plays a role in postnatal myogenesis, may be involved in the regulation of satellite cells self-renewal. The chain is Retrotransposon Gag-like protein 3 from Mus musculus (Mouse).